Consider the following 475-residue polypeptide: UDP-N-acetylmuramate--L-alanine ligase (475 aa).

125 to 131 (GTHGKTT) contacts ATP.

This sequence belongs to the MurCDEF family.

The protein resides in the cytoplasm. The catalysed reaction is UDP-N-acetyl-alpha-D-muramate + L-alanine + ATP = UDP-N-acetyl-alpha-D-muramoyl-L-alanine + ADP + phosphate + H(+). Its pathway is cell wall biogenesis; peptidoglycan biosynthesis. Cell wall formation. The sequence is that of UDP-N-acetylmuramate--L-alanine ligase from Glaesserella parasuis serovar 5 (strain SH0165) (Haemophilus parasuis).